A 211-amino-acid polypeptide reads, in one-letter code: Thymidylate kinase (211 aa).

11-18 is an ATP binding site; it reads GPDGAGKT.

Belongs to the thymidylate kinase family.

It catalyses the reaction dTMP + ATP = dTDP + ADP. Its function is as follows. Phosphorylation of dTMP to form dTDP in both de novo and salvage pathways of dTTP synthesis. This is Thymidylate kinase from Streptococcus pyogenes serotype M1.